Here is a 238-residue protein sequence, read N- to C-terminus: Tetraspanin-4 (238 aa).

Over 1-13 (MARGCLQGVKYLM) the chain is Cytoplasmic. Residues 14–34 (FAFNLLFWLGGCGVLGVGIWL) form a helical membrane-spanning segment. At 35-55 (AATQGNFATLSSSFPSLSAAN) the chain is on the extracellular side. The chain crosses the membrane as a helical span at residues 56 to 76 (LLIVTGTFVMAIGFVGCIGAL). Residues 77–85 (KENKCLLLT) are Cytoplasmic-facing. The helical transmembrane segment at 86-106 (FFVLLLLVFLLEATIAVLFFA) threads the bilayer. The Extracellular segment spans residues 107 to 201 (YSDKIDSYAQ…ETVKAWLQEN (95 aa)). 2 N-linked (GlcNAc...) asparagine glycosylation sites follow: N152 and N161. A helical membrane pass occupies residues 202 to 222 (LLAVGIFGLCTALVQILGLTF). Topologically, residues 223–238 (AMTMYCQVVKADTYCA) are cytoplasmic.

It belongs to the tetraspanin (TM4SF) family. Forms a complex with integrins.

The protein localises to the membrane. The sequence is that of Tetraspanin-4 (Tspan4) from Mus musculus (Mouse).